Reading from the N-terminus, the 755-residue chain is Polyribonucleotide nucleotidyltransferase (755 aa).

Mg(2+)-binding residues include D493 and D499. The region spanning 560–619 is the KH domain; that stretch reads PRIMTIQIPVDKIGALIGPGGKTIRNICETTGAQIDIEDDGRVFITTPDGAAARQAISMI. In terms of domain architecture, S1 motif spans 629-698; that stretch reads GDIFLGKVVS…TTGKISLSRR (70 aa). A disordered region spans residues 699–755; that stretch reads AVLTGETPEERKAAGAAPRPRPREEQRGGRDEPRSLRDELRGPRREGDRPRPRRRDD. Basic and acidic residues predominate over residues 719–755; it reads RPREEQRGGRDEPRSLRDELRGPRREGDRPRPRRRDD.

This sequence belongs to the polyribonucleotide nucleotidyltransferase family. The cofactor is Mg(2+).

The protein localises to the cytoplasm. It carries out the reaction RNA(n+1) + phosphate = RNA(n) + a ribonucleoside 5'-diphosphate. Its function is as follows. Involved in mRNA degradation. Catalyzes the phosphorolysis of single-stranded polyribonucleotides processively in the 3'- to 5'-direction. In Chloroflexus aurantiacus (strain ATCC 29366 / DSM 635 / J-10-fl), this protein is Polyribonucleotide nucleotidyltransferase.